The sequence spans 551 residues: Formate--tetrahydrofolate ligase (551 aa).

Residue 65-72 coordinates ATP; that stretch reads TPAGEGKT.

This sequence belongs to the formate--tetrahydrofolate ligase family.

The catalysed reaction is (6S)-5,6,7,8-tetrahydrofolate + formate + ATP = (6R)-10-formyltetrahydrofolate + ADP + phosphate. The protein operates within one-carbon metabolism; tetrahydrofolate interconversion. The chain is Formate--tetrahydrofolate ligase from Thermosipho melanesiensis (strain DSM 12029 / CIP 104789 / BI429).